Reading from the N-terminus, the 48-residue chain is Large ribosomal subunit protein bL32 (48 aa).

The disordered stretch occupies residues 28–48 (VKDKDGSWKMPHRINKTTGEY).

Belongs to the bacterial ribosomal protein bL32 family.

In Campylobacter concisus (strain 13826), this protein is Large ribosomal subunit protein bL32.